We begin with the raw amino-acid sequence, 154 residues long: Large ribosomal subunit protein uL23y (154 aa).

This sequence belongs to the universal ribosomal protein uL23 family.

Functionally, binds to a specific region on the 26S rRNA. The chain is Large ribosomal subunit protein uL23y (RPL23AB) from Arabidopsis thaliana (Mouse-ear cress).